The sequence spans 297 residues: Pyridoxal 5'-phosphate synthase subunit PdxS (297 aa).

Asp-27 serves as a coordination point for D-ribose 5-phosphate. Lys-84 functions as the Schiff-base intermediate with D-ribose 5-phosphate in the catalytic mechanism. Gly-156 serves as a coordination point for D-ribose 5-phosphate. Residue Arg-168 participates in D-glyceraldehyde 3-phosphate binding. Residues Gly-217 and 238 to 239 (GS) contribute to the D-ribose 5-phosphate site.

The protein belongs to the PdxS/SNZ family. As to quaternary structure, in the presence of PdxT, forms a dodecamer of heterodimers.

It catalyses the reaction aldehydo-D-ribose 5-phosphate + D-glyceraldehyde 3-phosphate + L-glutamine = pyridoxal 5'-phosphate + L-glutamate + phosphate + 3 H2O + H(+). It functions in the pathway cofactor biosynthesis; pyridoxal 5'-phosphate biosynthesis. Catalyzes the formation of pyridoxal 5'-phosphate from ribose 5-phosphate (RBP), glyceraldehyde 3-phosphate (G3P) and ammonia. The ammonia is provided by the PdxT subunit. Can also use ribulose 5-phosphate and dihydroxyacetone phosphate as substrates, resulting from enzyme-catalyzed isomerization of RBP and G3P, respectively. This is Pyridoxal 5'-phosphate synthase subunit PdxS from Corynebacterium efficiens (strain DSM 44549 / YS-314 / AJ 12310 / JCM 11189 / NBRC 100395).